Here is a 147-residue protein sequence, read N- to C-terminus: UPAR/Ly6 domain-containing protein CG9338 (147 aa).

A signal peptide spans 1-23 (MVSSVKMILALTVLATVACTGYA). At 24-126 (IKCYQCDSLT…VCTEDECNGT (103 aa)) the chain is on the extracellular side. Intrachain disulfides connect cysteine 26–cysteine 72, cysteine 29–cysteine 37, cysteine 51–cysteine 89, cysteine 101–cysteine 115, and cysteine 118–cysteine 123. Residue asparagine 68 is glycosylated (N-linked (GlcNAc...) asparagine). The GPI-anchor amidated asparagine moiety is linked to residue asparagine 124. Residues 125-147 (GTSSLAPIAGVILLFFGLARLLA) constitute a propeptide, removed in mature form. A helical membrane pass occupies residues 127-147 (SSLAPIAGVILLFFGLARLLA).

This sequence belongs to the quiver family.

It is found in the cell membrane. In terms of biological role, may be involved in regulating neuron excitability. This Drosophila melanogaster (Fruit fly) protein is UPAR/Ly6 domain-containing protein CG9338.